We begin with the raw amino-acid sequence, 43 residues long: Alpha-1-antiproteinase 4 (43 aa).

The protein belongs to the serpin family. N-glycosylated with carbohydrates having biantennary side chains. As to expression, plasma.

The protein resides in the secreted. This chain is Alpha-1-antiproteinase 4, found in Equus caballus (Horse).